Reading from the N-terminus, the 436-residue chain is tRNA-2-methylthio-N(6)-dimethylallyladenosine synthase (436 aa).

Residues 1–115 enclose the MTTase N-terminal domain; sequence MRVFFKTYGC…IAEVLQKAAR (115 aa). 6 residues coordinate [4Fe-4S] cluster: C10, C46, C80, C151, C155, and C158. Residues 137–368 enclose the Radical SAM core domain; sequence RFSKHHAWIT…LELQKQINRE (232 aa). Residues 371-432 enclose the TRAM domain; it reads MQYLGKVVEI…AGPLYGKLQK (62 aa).

This sequence belongs to the methylthiotransferase family. MiaB subfamily. Monomer. It depends on [4Fe-4S] cluster as a cofactor.

The protein localises to the cytoplasm. It catalyses the reaction N(6)-dimethylallyladenosine(37) in tRNA + (sulfur carrier)-SH + AH2 + 2 S-adenosyl-L-methionine = 2-methylsulfanyl-N(6)-dimethylallyladenosine(37) in tRNA + (sulfur carrier)-H + 5'-deoxyadenosine + L-methionine + A + S-adenosyl-L-homocysteine + 2 H(+). In terms of biological role, catalyzes the methylthiolation of N6-(dimethylallyl)adenosine (i(6)A), leading to the formation of 2-methylthio-N6-(dimethylallyl)adenosine (ms(2)i(6)A) at position 37 in tRNAs that read codons beginning with uridine. This is tRNA-2-methylthio-N(6)-dimethylallyladenosine synthase from Pseudothermotoga lettingae (strain ATCC BAA-301 / DSM 14385 / NBRC 107922 / TMO) (Thermotoga lettingae).